Reading from the N-terminus, the 151-residue chain is MVYILGVAVNDDKPVRFALLSFYGIGHAKAEEICAKLSFHNTLRVRELTNVQLTTLSQLLSGMTIEGDLRRQRNADISRLVNIRCYRGMRHVNGLPVNGQNTRTNAKTAKKLNKVPRRGYMTLSPASTRPITWSFCLPRMVSVFQKLKHIH.

This sequence belongs to the universal ribosomal protein uS13 family. In terms of assembly, component of the mitochondrial small ribosomal subunit (mt-SSU). Mature yeast 74S mitochondrial ribosomes consist of a small (37S) and a large (54S) subunit. The 37S small subunit contains a 15S ribosomal RNA (15S mt-rRNA) and at least 32 different proteins. The 54S large subunit contains a 21S rRNA (21S mt-rRNA) and at least 45 different proteins.

It is found in the mitochondrion. Its function is as follows. Component of the mitochondrial ribosome (mitoribosome), a dedicated translation machinery responsible for the synthesis of mitochondrial genome-encoded proteins, including at least some of the essential transmembrane subunits of the mitochondrial respiratory chain. The mitoribosomes are attached to the mitochondrial inner membrane and translation products are cotranslationally integrated into the membrane. The protein is Small ribosomal subunit protein uS13m (sws2) of Schizosaccharomyces pombe (strain 972 / ATCC 24843) (Fission yeast).